The sequence spans 341 residues: Serpentine receptor class beta-3 (341 aa).

The Extracellular portion of the chain corresponds to 1–23; it reads MLETNDSVCELAYQLAYHPVYRS. Asparagine 5 is a glycosylation site (N-linked (GlcNAc...) asparagine). The chain crosses the membrane as a helical span at residues 24-44; sequence SQFWSMLVSSLSIPALIYFIT. Topologically, residues 45–58 are cytoplasmic; sequence RKIFFLHFHGNLKC. Residues 59-79 traverse the membrane as a helical segment; sequence LLIVYFICNLLFSMALCFAFF. Topologically, residues 80–103 are extracellular; sequence YQFLIPFFVTSKCQLLINTTLFKW. N-linked (GlcNAc...) asparagine glycosylation is present at asparagine 97. The helical transmembrane segment at 104 to 124 threads the bilayer; the sequence is GQICSFLLLTSSMLLPIGFSI. Residues 125–141 are Cytoplasmic-facing; the sequence is ERFVALGNAQKYESSRT. Residues 142 to 162 form a helical membrane-spanning segment; it reads FLGPVIIFIIIAVDFSIIFSV. The Extracellular segment spans residues 163-187; that stretch reads YKNEPFTEGFYSFILVPSTTASQIN. A helical membrane pass occupies residues 188-208; sequence MYFFVLLFVKIFNLLLNCILL. Over 209–237 the chain is Cytoplasmic; it reads RIHKKIRIKYYSLSVRYEMEEILQSSKFT. The chain crosses the membrane as a helical span at residues 238–258; sequence FIIRFTHLLFFGFYVVVILFV. Topologically, residues 259 to 276 are extracellular; the sequence is RIMGESFFNGTLNYSVAR. Asparagine 267 and asparagine 271 each carry an N-linked (GlcNAc...) asparagine glycan. Residues 277–297 form a helical membrane-spanning segment; that stretch reads GVFCTVPTYNLIIVIIGIKSL. Residues 298-341 are Cytoplasmic-facing; that stretch reads RHLNLQRLNKVQSTVQIKSTGKEGSKNYEDIITNYWDSVSSRTP.

It belongs to the nematode receptor-like protein srb family. As to expression, expressed throughout the head.

The protein localises to the cell membrane. Its subcellular location is the perikaryon. The protein resides in the cell projection. It localises to the dendrite. Its function is as follows. G-protein coupled receptor. The sequence is that of Serpentine receptor class beta-3 from Caenorhabditis elegans.